Reading from the N-terminus, the 220-residue chain is Ribose-5-phosphate isomerase A (220 aa).

Substrate contacts are provided by residues 28–31 (TGST), 81–84 (DGAD), and 94–97 (KGGG). Glu103 (proton acceptor) is an active-site residue. Lys121 contacts substrate.

Belongs to the ribose 5-phosphate isomerase family. As to quaternary structure, homodimer.

The catalysed reaction is aldehydo-D-ribose 5-phosphate = D-ribulose 5-phosphate. It functions in the pathway carbohydrate degradation; pentose phosphate pathway; D-ribose 5-phosphate from D-ribulose 5-phosphate (non-oxidative stage): step 1/1. Its function is as follows. Catalyzes the reversible conversion of ribose-5-phosphate to ribulose 5-phosphate. In Shewanella baltica (strain OS223), this protein is Ribose-5-phosphate isomerase A.